We begin with the raw amino-acid sequence, 70 residues long: Small ribosomal subunit protein bS21 (70 aa).

This sequence belongs to the bacterial ribosomal protein bS21 family.

In Polynucleobacter asymbioticus (strain DSM 18221 / CIP 109841 / QLW-P1DMWA-1) (Polynucleobacter necessarius subsp. asymbioticus), this protein is Small ribosomal subunit protein bS21.